The following is a 1197-amino-acid chain: Sensor protein EvgS (1197 aa).

The N-terminal stretch at 1–21 (MKFLPYIFLLCCGLWSTISFA) is a signal peptide. The Cytoplasmic portion of the chain corresponds to 22–325 (DEDYIEYRGI…SMTDENGSVR (304 aa)). A helical membrane pass occupies residues 326–346 (GVMGDILNIITLQTGLNFSPI). At 347-537 (TVSHNIHAGT…TWDLYSEQFY (191 aa)) the chain is on the periplasmic side. A helical membrane pass occupies residues 538-558 (IVTTLSVLLVGSSLLWGFYLL). The Cytoplasmic portion of the chain corresponds to 559–1197 (RSVRRRKVIQ…EIAVFCQQNN (639 aa)). The Histidine kinase domain maps to 718-938 (TMSHEIRTPI…TFTITIPVEI (221 aa)). His721 carries the post-translational modification Phosphohistidine; by autocatalysis. Residues 960-1074 (SILIADDHPT…VLKTHLSQLH (115 aa)) form the Response regulatory domain. 4-aspartylphosphate is present on Asp1009. Residues 1098–1197 (DLQLMQEILM…EIAVFCQQNN (100 aa)) form the HPt domain. Position 1137 is a phosphohistidine (His1137).

Activation requires a sequential transfer of a phosphate group from a His in the primary transmitter domain, to an Asp in the receiver domain and to a His in the secondary transmitter domain.

The protein resides in the cell inner membrane. It catalyses the reaction ATP + protein L-histidine = ADP + protein N-phospho-L-histidine.. Member of the two-component regulatory system EvgS/EvgA. Phosphorylates EvgA via a four-step phosphorelay in response to environmental signals. The protein is Sensor protein EvgS (evgS) of Escherichia coli O157:H7.